The following is a 637-amino-acid chain: Protein arginine N-methyltransferase 5 (637 aa).

Residue Ala-2 is modified to N-acetylalanine. Residues 13-292 (RVSSGRDLNC…YLEYLSQNRP (280 aa)) are TIM barrel. The region spanning 308-615 (LQSPLQPLMD…SNSKKVWYEW (308 aa)) is the SAM-dependent MTase PRMT-type domain. Residue Tyr-324 coordinates S-adenosyl-L-methionine. Phe-327 contributes to the a protein binding site. Residues 333 to 334 (KY), Glu-392, and 419 to 420 (DM) contribute to the S-adenosyl-L-methionine site. A protein contacts are provided by Glu-435 and Glu-444. Active-site proton donor/acceptor residues include Glu-435 and Glu-444. The segment at 465–637 (PGEYTSFLAP…PTGRSYTIGL (173 aa)) is beta barrel. The interval 488–494 (REKDRDP) is dimerization.

Belongs to the class I-like SAM-binding methyltransferase superfamily. Protein arginine N-methyltransferase family. Forms, at least, homodimers and homotetramers. Component of the methylosome complex, composed of PRMT5, WDR77 and CLNS1A. Found in a complex composed of PRMT5, WDR77 and RIOK1. RIOK1 and CLNS1A associate with PRMT5 in a mutually exclusive fashion, which allows the recruitment of distinct methylation substrates, such as nucleolin/NCL and Sm proteins, respectively. Interacts with PRDM1. Identified in a complex composed of methylosome and PRMT1 and ERH. Interacts with EGFR; methylates EGFR and stimulates EGFR-mediated ERK activation. Interacts with HOXA9. Interacts with SRGAP2. Found in a complex with COPRS, RUNX1 and CBFB. Interacts with CHTOP; the interaction symmetrically methylates CHTOP, but seems to require the presence of PRMT1. Interacts with EPB41L3; this modulates methylation of target proteins. Component of a high molecular weight E2F-pocket protein complex, CERC (cyclin E1 repressor complex). Associates with SWI/SNF remodeling complexes containing SMARCA2 and SMARCA4. Interacts with JAK2, SSTR1, SUPT5H, BRAF and with active RAF1. Interacts with LSM11, PRMT7 and SNRPD3. Interacts with COPRS; promoting its recruitment on histone H4. Interacts with CLNS1A/pICln. Identified in a complex with CLNS1A/pICln and Sm proteins. Interacts with RPS10. Interacts with WDR77. Interacts with IWS1. Interacts with CRY1. Interacts with POLR2A. Interacts with SMN1/SMN2. Interacts with LYAR; this interaction is direct. Interacts with TTC5/STRAP; this interaction is DNA damage-dependent and promotes PRMT5 interaction with p53/TP53. Interacts with p53/TP53 in response to DNA damage; the interaction is TTC5/STRAP dependent. Interacts with FAM47E; the interaction is direct, promotes PRMT5 localization to chromatin, and does not disrupt its association with WDR77 or STUB1. Interacts with TDRD6. Interacts with STUB1. Interacts with MBD2. Does not interact with MBD3.

It is found in the cytoplasm. The protein resides in the nucleus. The protein localises to the golgi apparatus. The catalysed reaction is L-arginyl-[protein] + 2 S-adenosyl-L-methionine = N(omega),N(omega)'-dimethyl-L-arginyl-[protein] + 2 S-adenosyl-L-homocysteine + 2 H(+). Activity is increased by EGF, HGF, FGF1 or FGF2 treatments, and slightly decreased by NGF treatment. Arginine methyltransferase that can both catalyze the formation of omega-N monomethylarginine (MMA) and symmetrical dimethylarginine (sDMA), with a preference for the formation of MMA. Specifically mediates the symmetrical dimethylation of arginine residues in the small nuclear ribonucleoproteins Sm D1 (SNRPD1) and Sm D3 (SNRPD3); such methylation being required for the assembly and biogenesis of snRNP core particles. Methylates SUPT5H and may regulate its transcriptional elongation properties. May methylate the N-terminal region of MBD2. Mono- and dimethylates arginine residues of myelin basic protein (MBP) in vitro. May play a role in cytokine-activated transduction pathways. Negatively regulates cyclin E1 promoter activity and cellular proliferation. Methylates histone H2A and H4 'Arg-3' during germ cell development. Methylates histone H3 'Arg-8', which may repress transcription. Methylates the Piwi proteins (PIWIL1, PIWIL2 and PIWIL4), methylation of Piwi proteins being required for the interaction with Tudor domain-containing proteins and subsequent localization to the meiotic nuage. Methylates RPS10. Attenuates EGF signaling through the MAPK1/MAPK3 pathway acting at 2 levels. First, monomethylates EGFR; this enhances EGFR 'Tyr-1197' phosphorylation and PTPN6 recruitment, eventually leading to reduced SOS1 phosphorylation. Second, methylates RAF1 and probably BRAF, hence destabilizing these 2 signaling proteins and reducing their catalytic activity. Required for induction of E-selectin and VCAM-1, on the endothelial cells surface at sites of inflammation. Methylates HOXA9. Methylates and regulates SRGAP2 which is involved in cell migration and differentiation. Acts as a transcriptional corepressor in CRY1-mediated repression of the core circadian component PER1 by regulating the H4R3 dimethylation at the PER1 promoter. Methylates GM130/GOLGA2, regulating Golgi ribbon formation. Methylates H4R3 in genes involved in glioblastomagenesis in a CHTOP- and/or TET1-dependent manner. Symmetrically methylates POLR2A, a modification that allows the recruitment to POLR2A of proteins including SMN1/SMN2 and SETX. This is required for resolving RNA-DNA hybrids created by RNA polymerase II, that form R-loop in transcription terminal regions, an important step in proper transcription termination. Along with LYAR, binds the promoter of gamma-globin HBG1/HBG2 and represses its expression. Symmetrically methylates NCL. Methylates p53/TP53; methylation might possibly affect p53/TP53 target gene specificity. Involved in spliceosome maturation and mRNA splicing in prophase I spermatocytes through the catalysis of the symmetrical arginine dimethylation of SNRPB (small nuclear ribonucleoprotein-associated protein) and the interaction with tudor domain-containing protein TDRD6. This chain is Protein arginine N-methyltransferase 5 (PRMT5), found in Macaca fascicularis (Crab-eating macaque).